A 782-amino-acid chain; its full sequence is MGKRDRADREKKKSKKRHYEDEEDEEDDAPGNDTQEAVPSAAGKQVDESGTKVDEYGAKDYRLQMPLKDDHTSRPLWVAPDGHIFLEAFSPVYKYAQDFLVAIAEPVCRPTHVHEYKLTAYSLYAAVSVGLQTSDITDYLRKLSKTGVPEGIIQFIKLCTVSYGKVKLVLKHNRYFVESSHPDVIQHLLQDPVIRECRLRNSEGEATELITETFTSKSAIAKSVEGSGGPSTSRVTDPQGKSDIPTDLFDFYEQMDKDEEEEEETQTVSFEVKQEMIEELQKRCIHLEYPLLAEYDFRNDSVNPDINIDLKPTAVLRPYQEKSLRKMFGNGRARSGVIVLPCGAGKSLVGVTAACTVRKRCLVLGNSAVSVEQWKAQFKMWSTIDDSQICRFTSDAKDKPIGCSIAISTYSMLGHTTKRSWEAERVMEWLKTQEWGLMILDEVHTIPAKMFRRVLTIVQAHCKLGLTATLVREDDKIVDLNFLIGPKLYEANWMELQNSGYIAKVQCAEVWCPMSPEFYREYVAIKTKKRILLYTMNPNKFRACQFLIKFHERRNDKIIVFADNVFALKEYAIRLNKPYIYGPTSQGERMQILQNFKHNPKINTIFISKVGDTSFDLPEANVLIQISSHGGSRRQEAQRLGRVLRAKKGMVAEEYNAFFYSLVSQDTQEMAYSTKRQRFLVDQGYSFKVITKLAGMEEEDLAFSTKEEQQQLLQKVLAATDLDAEEEVVAGEFGSKSSQVSRRFGTMSSMSGADDTVYMEYHSSRSKTSTKHVHPLFKRFRK.

A compositionally biased stretch (basic and acidic residues) spans 1–11; it reads MGKRDRADREK. Positions 1–51 are disordered; the sequence is MGKRDRADREKKKSKKRHYEDEEDEEDDAPGNDTQEAVPSAAGKQVDESGT. Residues 6–18 carry the Nuclear localization signal motif; that stretch reads RADREKKKSKKRH. A compositionally biased stretch (acidic residues) spans 21 to 30; it reads DEEDEEDDAP. The 162-residue stretch at 327–488 folds into the Helicase ATP-binding domain; the sequence is MFGNGRARSG…DLNFLIGPKL (162 aa). An ATP-binding site is contributed by 340–347; the sequence is LPCGAGKS. A DEVH box motif is present at residues 441 to 444; that stretch reads DEVH. Residues 542–702 enclose the Helicase C-terminal domain; it reads RACQFLIKFH…LAGMEEEDLA (161 aa). Position 686 is a phosphoserine (Ser-686). A Phosphoserine; by CK2 modification is found at Ser-751.

It belongs to the helicase family. RAD25/XPB subfamily. As to quaternary structure, component of the 7-subunit TFIIH core complex composed of XPB/ERCC3, XPD/ERCC2, GTF2H1, GTF2H2, GTF2H3, GTF2H4 and GTF2H5, which is active in NER. The core complex associates with the 3-subunit CDK-activating kinase (CAK) module composed of CCNH/cyclin H, CDK7 and MNAT1 to form the 10-subunit holoenzyme (holo-TFIIH) active in transcription. Interacts with PUF60. Interacts with ATF7IP. Interacts with KAT2A; leading to KAT2A recruitment to promoters and acetylation of histones. Part of TBP-based Pol II pre-initiation complex (PIC), in which Pol II core assembles with general transcription factors and other specific initiation factors including GTF2E1, GTF2E2, GTF2F1, GTF2F2, TCEA1, ERCC2, ERCC3, GTF2H2, GTF2H3, GTF2H4, GTF2H5, GTF2A1, GTF2A2, GTF2B and TBP; this large multi-subunit PIC complex mediates DNA unwinding and targets Pol II core to the transcription start site where the first phosphodiester bond forms. Phosphorylation on Ser-751 by CK2 controls the 5'-excision activity of ERCC1-XPF endonuclease; phosphorylated protein inhibits the excision activity and thus NER. Dephosphorylation reactivates the 5'-excision step. Phosphorylation has no effect on transcription or the 3'-5' helicase activity.

It localises to the nucleus. It carries out the reaction Couples ATP hydrolysis with the unwinding of duplex DNA by translocating in the 3'-5' direction.. The enzyme catalyses ATP + H2O = ADP + phosphate + H(+). Phosphorylation on Ser-751 by CK2 controls the 5'-excision activity of ERCC1-XPF endonuclease; phosphorylated protein inhibits the excision activity and thus NER. ATPase activity is stimulated by TFIIH subunit p52 (GTF2H4). DNA translocase activity by this subunit in TFIIH is stimulated by XPA, ERCC5/XPG and XFP plus ERCC1. In terms of biological role, ATP-dependent 3'-5' DNA helicase/translocase; binds dsDNA rather than ssDNA, unzipping it in a translocase rather than classical helicase activity. Component of the general transcription and DNA repair factor IIH (TFIIH) core complex. When complexed to CDK-activating kinase (CAK), involved in RNA transcription by RNA polymerase II. The ATPase activity of XPB/ERCC3, but not its helicase activity, is required for DNA opening; it may wrap around the damaged DNA wedging it open, causing localized melting and twisting that allows XPD/ERCC2 helicase to anchor. The ATP-dependent helicase activity of XPB/ERCC3 may be required for promoter escape. Also involved in transcription-coupled nucleotide excision repair (NER) of damaged DNA. In NER, TFIIH acts by opening DNA around the lesion to allow the excision of the damaged oligonucleotide and its replacement by a new DNA fragment. The structure of the TFIIH transcription complex differs from the NER-TFIIH complex; large movements by XPD/ERCC2 and XPB/ERCC3 are stabilized by XPA. The sequence is that of General transcription and DNA repair factor IIH helicase/translocase subunit XPB (ERCC3) from Bos taurus (Bovine).